A 184-amino-acid polypeptide reads, in one-letter code: Probable cobalt-precorrin-6B C(15)-methyltransferase (decarboxylating) (184 aa).

Residues T12, 36-40 (GCGTG), D59, and A87 each bind S-adenosyl-L-methionine.

This sequence belongs to the methyltransferase superfamily. Archaeal-type CbiT family.

It carries out the reaction Co-precorrin-6B + S-adenosyl-L-methionine = Co-precorrin-7 + S-adenosyl-L-homocysteine + CO2. Its pathway is cofactor biosynthesis; adenosylcobalamin biosynthesis; cob(II)yrinate a,c-diamide from sirohydrochlorin (anaerobic route): step 8/10. Catalyzes the methylation of C-15 in cobalt-precorrin-6B followed by the decarboxylation of C-12 to form cobalt-precorrin-7. This chain is Probable cobalt-precorrin-6B C(15)-methyltransferase (decarboxylating), found in Methanosarcina mazei (strain ATCC BAA-159 / DSM 3647 / Goe1 / Go1 / JCM 11833 / OCM 88) (Methanosarcina frisia).